A 430-amino-acid polypeptide reads, in one-letter code: Adenylosuccinate synthetase (430 aa).

GTP contacts are provided by residues Gly12–Lys18 and Gly40–Thr42. Residue Asp13 is the Proton acceptor of the active site. Mg(2+) is bound by residues Asp13 and Gly40. Residues Asp13–Lys16, Asn38–His41, Thr128, Arg142, Gln223, Thr238, and Arg302 each bind IMP. The active-site Proton donor is the His41. Position 298 to 304 (Thr298 to Arg304) interacts with substrate. GTP-binding positions include Arg304, Ser330–Asp332, and Ser412–Gly414.

This sequence belongs to the adenylosuccinate synthetase family. In terms of assembly, homodimer. The cofactor is Mg(2+).

The protein localises to the cytoplasm. The catalysed reaction is IMP + L-aspartate + GTP = N(6)-(1,2-dicarboxyethyl)-AMP + GDP + phosphate + 2 H(+). The protein operates within purine metabolism; AMP biosynthesis via de novo pathway; AMP from IMP: step 1/2. In terms of biological role, plays an important role in the de novo pathway of purine nucleotide biosynthesis. Catalyzes the first committed step in the biosynthesis of AMP from IMP. This is Adenylosuccinate synthetase from Streptococcus sanguinis (strain SK36).